A 129-amino-acid chain; its full sequence is Copper chaperone GriE (129 aa).

A signal peptide (tat-type signal) is located at residues 1-37 (MPMNRREMVMATTGAALAAAAAVPLLSGGEGEGAAEA). Positions 32-51 (EGAAEAAAAPAKATGRGREH) are disordered. Low complexity predominate over residues 34–45 (AAEAAAAPAKAT).

The protein belongs to the melC1 family. In terms of processing, predicted to be exported by the Tat system. The position of the signal peptide cleavage has not been experimentally proven.

Functionally, involved in the transfer of Cu(2+) ions to the apo form of o-aminophenol oxidase GriF in the grixazone biosynthetic pathway. The protein is Copper chaperone GriE (griE) of Streptomyces griseus subsp. griseus (strain JCM 4626 / CBS 651.72 / NBRC 13350 / KCC S-0626 / ISP 5235).